Consider the following 777-residue polypeptide: Ribosome-releasing factor 2, mitochondrial (777 aa).

A tr-type G domain is found at alanine 68–glutamate 353. GTP is bound by residues alanine 77–threonine 84, aspartate 141–histidine 145, and asparagine 195–aspartate 198.

It belongs to the TRAFAC class translation factor GTPase superfamily. Classic translation factor GTPase family. EF-G/EF-2 subfamily.

Its subcellular location is the mitochondrion. It carries out the reaction GTP + H2O = GDP + phosphate + H(+). Functionally, mitochondrial GTPase that mediates the disassembly of ribosomes from messenger RNA at the termination of mitochondrial protein biosynthesis. Acts in collaboration with MRRF. GTP hydrolysis follows the ribosome disassembly and probably occurs on the ribosome large subunit. Not involved in the GTP-dependent ribosomal translocation step during translation elongation. This Bos taurus (Bovine) protein is Ribosome-releasing factor 2, mitochondrial.